Consider the following 754-residue polypeptide: RNA exonuclease 5 (754 aa).

The interval 1–36 is disordered; it reads MELEEEENPRKRKETPNSALTTELDRPSWDVQDPEP. Residues 222–370 enclose the Exonuclease domain; it reads LFGLDCEVCL…EDARTALELV (149 aa). RRM domains follow at residues 488 to 562 and 583 to 662; these read STIY…RLLT and GTIY…RHLQ.

The polypeptide is RNA exonuclease 5 (Rexo5) (Rattus norvegicus (Rat)).